The following is a 467-amino-acid chain: Glutamate--tRNA ligase (467 aa).

A 'HIGH' region motif is present at residues 9–19 (PSPTGYLHIGG). The short motif at 237-241 (KLSKR) is the 'KMSKS' region element. K240 lines the ATP pocket.

The protein belongs to the class-I aminoacyl-tRNA synthetase family. Glutamate--tRNA ligase type 1 subfamily. In terms of assembly, monomer.

It is found in the cytoplasm. The enzyme catalyses tRNA(Glu) + L-glutamate + ATP = L-glutamyl-tRNA(Glu) + AMP + diphosphate. Catalyzes the attachment of glutamate to tRNA(Glu) in a two-step reaction: glutamate is first activated by ATP to form Glu-AMP and then transferred to the acceptor end of tRNA(Glu). This is Glutamate--tRNA ligase from Xanthomonas euvesicatoria pv. vesicatoria (strain 85-10) (Xanthomonas campestris pv. vesicatoria).